A 479-amino-acid polypeptide reads, in one-letter code: Glutamyl-tRNA(Gln) amidotransferase subunit A (479 aa).

Residues lysine 75 and serine 150 each act as charge relay system in the active site. Serine 174 serves as the catalytic Acyl-ester intermediate.

The protein belongs to the amidase family. GatA subfamily. In terms of assembly, heterotrimer of A, B and C subunits.

It catalyses the reaction L-glutamyl-tRNA(Gln) + L-glutamine + ATP + H2O = L-glutaminyl-tRNA(Gln) + L-glutamate + ADP + phosphate + H(+). Functionally, allows the formation of correctly charged Gln-tRNA(Gln) through the transamidation of misacylated Glu-tRNA(Gln) in organisms which lack glutaminyl-tRNA synthetase. The reaction takes place in the presence of glutamine and ATP through an activated gamma-phospho-Glu-tRNA(Gln). This chain is Glutamyl-tRNA(Gln) amidotransferase subunit A, found in Synechococcus elongatus (strain ATCC 33912 / PCC 7942 / FACHB-805) (Anacystis nidulans R2).